The following is a 342-amino-acid chain: Alpha-(1,3)-fucosyltransferase 7 (342 aa).

The Cytoplasmic segment spans residues 1 to 11 (MQNAGLSPTPS). Residues 12 to 31 (LRALGGLAMAALLSTVWLWW) form a helical; Signal-anchor for type II membrane protein membrane-spanning segment. Over 32–342 (RLGAAPGGAP…YQDLEGWFQA (311 aa)) the chain is Extracellular. Cys68 and Cys76 are joined by a disulfide. A glycan (N-linked (GlcNAc...) asparagine) is linked at Asn81. Cysteines 211 and 214 form a disulfide. The N-linked (GlcNAc...) asparagine glycan is linked to Asn291. Cys318 and Cys321 are joined by a disulfide.

The protein belongs to the glycosyltransferase 10 family. In terms of processing, N-glycosylated. As to expression, expressed in thymus, spleen, liver and lung. Highly expressed in the thymus and lower expressed in the lung.

The protein resides in the membrane. It carries out the reaction an N-acetyl-alpha-neuraminyl-(2-&gt;3)-beta-D-galactosyl-(1-&gt;4)-N-acetyl-beta-D-glucosaminyl derivative + GDP-beta-L-fucose = an alpha-Neu5Ac-(2-&gt;3)-beta-D-Gal-(1-&gt;4)-[alpha-L-Fuc-(1-&gt;3)]-beta-D-GlcNAc derivative + GDP + H(+). It catalyses the reaction a neolactoside IV(3)-alpha-NeuAc-nLc4Cer + GDP-beta-L-fucose = a neolactoside IV(3)-alpha-NeuNAc,III(3)-alpha-Fuc-nLc4Cer + GDP + H(+). The catalysed reaction is a neolactoside VI(3)-alpha-NeuNAc-nLc6Cer + GDP-beta-L-fucose = a neolactoside VI(3)-alpha-NeuAc,V(3)-alphaFuc-nLc6Cer + GDP + H(+). The enzyme catalyses an alpha-Neu5Ac-(2-&gt;3)-beta-D-Gal-(1-&gt;4)-beta-D-GlcNAc-(1-&gt;3)-beta-D-Gal-(1-&gt;4)-[alpha-L-Fuc-(1-&gt;3)]-beta-D-GlcNAc derivative + GDP-beta-L-fucose = an alpha-Neu5Ac-(2-&gt;3)-beta-D-Gal-(1-&gt;4)-[alpha-L-Fuc-(1-&gt;3)]-beta-D-GlcNAc-(1-&gt;3)-beta-D-Gal-(1-&gt;4)-[alpha-L-Fuc-(1-&gt;3)]-beta-D-GlcNAc derivative + GDP + H(+). It carries out the reaction an alpha-Neu5Ac-(2-&gt;3)-beta-D-Gal-(1-&gt;4)-beta-D-GlcNAc6S derivative + GDP-beta-L-fucose = an alpha-Neu5Ac-(2-&gt;3)-beta-D-Gal-(1-&gt;4)-[alpha-L-Fuc-(1-&gt;3)]-beta-D-GlcNAc6S derivative + GDP + H(+). It catalyses the reaction alpha-Neu5Ac-(2-&gt;3)-beta-D-Gal-(1-&gt;4)-beta-D-GlcNAc-(1-&gt;3)-beta-D-Gal-(1-&gt;4)-D-Glc + GDP-beta-L-fucose = alpha-Neu5Ac-(2-&gt;3)-beta-D-Gal-(1-&gt;4)-[alpha-L-Fuc-(1-&gt;3)]-beta-D-GlcNAc-(1-&gt;3)-beta-D-Gal-(1-&gt;4)-D-Glc + GDP + H(+). The catalysed reaction is alpha-Neu5Ac-(2-&gt;3)-beta-D-Gal-(1-&gt;4)-beta-D-GlcNAc-(1-&gt;3)-beta-D-Gal-(1-&gt;4)-[alpha-L-Fuc-(1-&gt;3)]-beta-D-GlcNAc-(1-&gt;3)-beta-D-Gal-(1-&gt;4)-beta-D-GlcNAc + GDP-beta-L-fucose = alpha-Neu5Ac-(2-&gt;3)-beta-D-Gal-(1-&gt;4)-[alpha-L-Fuc-(1-&gt;3)]-beta-D-GlcNAc-(1-&gt;3)-beta-D-Gal-(1-&gt;4)-[alpha-L-Fuc-(1-&gt;3)]-beta-D-GlcNAc-(1-&gt;3)-beta-D-Gal-(1-&gt;4)-beta-D-GlcNAc + GDP + H(+). The enzyme catalyses alpha-Neu5Ac-(2-&gt;3)-beta-D-Gal-(1-&gt;4)-beta-D-GlcNAc-(1-&gt;3)-beta-D-Gal-(1-&gt;4)-beta-D-GlcNAc-(1-&gt;3)-beta-D-Gal-(1-&gt;4)-beta-D-GlcNAc + GDP-beta-L-fucose = alpha-Neu5Ac-(2-&gt;3)-beta-D-Gal-(1-&gt;4)-[alpha-L-Fuc-(1-&gt;3)]-beta-D-GlcNAc-(1-&gt;3)-beta-D-Gal-(1-&gt;4)-beta-D-GlcNAc-(1-&gt;3)-beta-D-Gal-(1-&gt;4)-beta-D-GlcNAc + GDP + H(+). Its pathway is protein modification; protein glycosylation. Its activity is regulated as follows. Inhibited by NaCl. Inhibited by GDP in a concentration dependent manner, with an IC(50) value of 93 uM. Also inhibited by GMP and GTP. Inhibited by N-ethylmaleimide. Activated by poly(ethylene glycol) by enhancing the thermal stability of FUT7. Activated by Mn2+, Ca2+, and Mg2+. Both panosialin A and B inhibit activity with IC(50) values of 4.8 and 5.3 ug/ml, respectively. Inhibited by gallic acid (GA) and (-)-epigallocatechin gallate (EGCG) in a time-dependent and irreversible manner with IC(50) values of 60 and 700 nM, respectively. Functionally, catalyzes the transfer of L-fucose, from a guanosine diphosphate-beta-L-fucose, to the N-acetyl glucosamine (GlcNAc) of a distal alpha2,3 sialylated lactosamine unit of a glycoprotein or a glycolipid-linked sialopolylactosamines chain through an alpha-1,3 glycosidic linkage and participates in the final fucosylation step in the biosynthesis of the sialyl Lewis X (sLe(x)), a carbohydrate involved in cell and matrix adhesion during leukocyte trafficking and fertilization. In vitro, also synthesizes sialyl-dimeric-Lex structures, from VIM-2 structures and both di-fucosylated and trifucosylated structures from mono-fucosylated precursors. However does not catalyze alpha 1-3 fucosylation when an internal alpha 1-3 fucosylation is present in polylactosamine chain and the fucosylation rate of the internal GlcNAc residues is reduced once fucose has been added to the distal GlcNAc. Also catalyzes the transfer of a fucose from GDP-beta-fucose to the 6-sulfated a(2,3)sialylated substrate to produce 6-sulfo sLex mediating significant L-selectin-dependent cell adhesion. Through sialyl-Lewis(x) biosynthesis, can control SELE- and SELP-mediated cell adhesion with leukocytes and allows leukocytes tethering and rolling along the endothelial tissue thereby enabling the leukocytes to accumulate at a site of inflammation. May enhance embryo implantation through sialyl Lewis X (sLeX)-mediated adhesion of embryo cells to endometrium. May affect insulin signaling by up-regulating the phosphorylation and expression of some signaling molecules involved in the insulin-signaling pathway through SLe(x) which is present on the glycans of the INSRR alpha subunit. This chain is Alpha-(1,3)-fucosyltransferase 7, found in Bos taurus (Bovine).